A 115-amino-acid polypeptide reads, in one-letter code: Non-specific lipid-transfer protein Cor a 8.0101 (115 aa).

The signal sequence occupies residues 1-23 (MGSLKLVCAVLLCMMVAAPVARA). Intrachain disulfides connect Cys-27–Cys-74, Cys-37–Cys-51, Cys-52–Cys-97, and Cys-72–Cys-111.

The protein belongs to the plant LTP family. In terms of assembly, monomer. In terms of tissue distribution, expressed in seed (at protein level). Expressed in seed.

Its function is as follows. Plant non-specific lipid-transfer proteins transfer phospholipids as well as galactolipids across membranes. May play a role in wax or cutin deposition in the cell walls of expanding epidermal cells and certain secretory tissues. The polypeptide is Non-specific lipid-transfer protein Cor a 8.0101 (Corylus avellana (European hazel)).